Reading from the N-terminus, the 258-residue chain is C4b-binding protein beta chain (258 aa).

The N-terminal stretch at 1–15 (MLCLVVCCLIWLISA) is a signal peptide. The 58-residue stretch at 18–75 (GSCSEPPPVNNSVFVGKETEEQILGIYLCIKGYHLVGKKSLVFDPSKEWNSTLPECLL) folds into the Sushi 1; atypical; lacks a Cys domain. N-linked (GlcNAc...) asparagine glycans are attached at residues Asn27, Asn67, Asn89, Asn95, and Asn114. 5 disulfide bridges follow: Cys46/Cys73, Cys78/Cys118, Cys104/Cys131, Cys136/Cys176, and Cys162/Cys188. Sushi domains lie at 76–133 (GHCP…ICRS) and 134–190 (RDCE…TCES). Asn218 is a glycosylation site (N-linked (GlcNAc...) asparagine).

In terms of assembly, disulfide-linked complex of alpha and beta chains.

The protein resides in the secreted. Functionally, controls the classical pathway of complement activation. It binds as a cofactor to C3b/C4b inactivator (C3bINA), which then hydrolyzes the complement fragment C4b. It also accelerates the degradation of the C4bC2a complex (C3 convertase) by dissociating the complement fragment C2a. It also interacts with anticoagulant protein S and with serum amyloid P component. In Rattus norvegicus (Rat), this protein is C4b-binding protein beta chain (C4bpb).